Here is a 323-residue protein sequence, read N- to C-terminus: Transcriptional regulator protein Pur-beta-A (323 aa).

3 disordered regions span residues 1-34 (MADG…QELA), 100-122 (SPEQ…PRRA), and 286-323 (QERQ…VDDD). Ala2 is subject to N-acetylalanine. Positions 9–19 (ERGGSSGGPGG) are enriched in gly residues. The segment covering 24–34 (MSREQETQELA) has biased composition (basic and acidic residues). The DNA-binding stretch occupies residues 27–257 (EQETQELATK…LRVSEVKPSY (231 aa)). The span at 286–305 (QERQRDKMYERRGPGDRERS) shows a compositional bias: basic and acidic residues. The span at 313-323 (DDSETEDVDDD) shows a compositional bias: acidic residues.

Belongs to the PUR DNA-binding protein family.

It is found in the nucleus. Functionally, transcriptional regulator which can act as an activator or a repressor. In Xenopus laevis (African clawed frog), this protein is Transcriptional regulator protein Pur-beta-A (purb-a).